The sequence spans 171 residues: Disulfide bond formation protein B (171 aa).

Over 1-13 (MTFISNLADTRLA) the chain is Cytoplasmic. The helical transmembrane segment at 14–30 (WGLLFLSALVLVAYALF) threads the bilayer. Residues 31-48 (SQHAMGLQPCIMCIYQRT) lie on the Periplasmic side of the membrane. Cys-40 and Cys-43 are oxidised to a cystine. Residues 49–63 (AIFGIMFACVPVLAA) traverse the membrane as a helical segment. Over 64-70 (NNMLTRL) the chain is Cytoplasmic. The helical transmembrane segment at 71 to 88 (FAFTVWGISAIWGGLIAW) threads the bilayer. Topologically, residues 89-144 (EHYDIQNAANPFFATCEIVPNFPSWLPLHEWLPNLFAATGDCGNIDWVFMDMSMPQ) are periplasmic. Cysteines 104 and 130 form a disulfide. The helical transmembrane segment at 145 to 163 (WMMVVFAIYSSIWFVVLAS) threads the bilayer. The Cytoplasmic portion of the chain corresponds to 164–171 (RLIGNRAI).

Belongs to the DsbB family.

The protein localises to the cell inner membrane. Required for disulfide bond formation in some periplasmic proteins. Acts by oxidizing the DsbA protein. The chain is Disulfide bond formation protein B from Pseudoalteromonas atlantica (strain T6c / ATCC BAA-1087).